We begin with the raw amino-acid sequence, 327 residues long: Glycerol-3-phosphate dehydrogenase [NAD(P)+] (327 aa).

Tryptophan 11, histidine 30, and lysine 103 together coordinate NADPH. Sn-glycerol 3-phosphate contacts are provided by lysine 103, glycine 131, and serine 133. An NADPH-binding site is contributed by alanine 135. Positions 186, 243, 253, 254, and 255 each coordinate sn-glycerol 3-phosphate. The active-site Proton acceptor is the lysine 186. Residue arginine 254 coordinates NADPH. Valine 281 and glutamate 283 together coordinate NADPH.

The protein belongs to the NAD-dependent glycerol-3-phosphate dehydrogenase family.

It is found in the cytoplasm. The enzyme catalyses sn-glycerol 3-phosphate + NAD(+) = dihydroxyacetone phosphate + NADH + H(+). It catalyses the reaction sn-glycerol 3-phosphate + NADP(+) = dihydroxyacetone phosphate + NADPH + H(+). It participates in membrane lipid metabolism; glycerophospholipid metabolism. Functionally, catalyzes the reduction of the glycolytic intermediate dihydroxyacetone phosphate (DHAP) to sn-glycerol 3-phosphate (G3P), the key precursor for phospholipid synthesis. The chain is Glycerol-3-phosphate dehydrogenase [NAD(P)+] from Wolbachia sp. subsp. Brugia malayi (strain TRS).